Reading from the N-terminus, the 195-residue chain is Sec-independent protein translocase protein TatB (195 aa).

The helical transmembrane segment at 1-21 (MFDIGFSELVLIFIVGLVVLG) threads the bilayer. The interval 166 to 195 (DESQFAAYYPPDDDLASPTPSQPQDKQNVS) is disordered. A compositionally biased stretch (polar residues) spans 183-195 (PTPSQPQDKQNVS).

This sequence belongs to the TatB family. The Tat system comprises two distinct complexes: a TatABC complex, containing multiple copies of TatA, TatB and TatC subunits, and a separate TatA complex, containing only TatA subunits. Substrates initially bind to the TatABC complex, which probably triggers association of the separate TatA complex to form the active translocon.

It localises to the cell inner membrane. In terms of biological role, part of the twin-arginine translocation (Tat) system that transports large folded proteins containing a characteristic twin-arginine motif in their signal peptide across membranes. Together with TatC, TatB is part of a receptor directly interacting with Tat signal peptides. TatB may form an oligomeric binding site that transiently accommodates folded Tat precursor proteins before their translocation. This chain is Sec-independent protein translocase protein TatB, found in Actinobacillus pleuropneumoniae serotype 5b (strain L20).